Here is a 246-residue protein sequence, read N- to C-terminus: Pyridoxine 5'-phosphate synthase (246 aa).

3-amino-2-oxopropyl phosphate is bound at residue asparagine 12. 1-deoxy-D-xylulose 5-phosphate is bound at residue 14–15 (DH). 3-amino-2-oxopropyl phosphate is bound at residue arginine 23. The Proton acceptor role is filled by histidine 48. The 1-deoxy-D-xylulose 5-phosphate site is built by arginine 50 and histidine 55. Catalysis depends on glutamate 75, which acts as the Proton acceptor. Threonine 105 is a binding site for 1-deoxy-D-xylulose 5-phosphate. Histidine 196 serves as the catalytic Proton donor. Residues glycine 197 and 218–219 (GH) each bind 3-amino-2-oxopropyl phosphate.

It belongs to the PNP synthase family. As to quaternary structure, homooctamer; tetramer of dimers.

It is found in the cytoplasm. It catalyses the reaction 3-amino-2-oxopropyl phosphate + 1-deoxy-D-xylulose 5-phosphate = pyridoxine 5'-phosphate + phosphate + 2 H2O + H(+). It participates in cofactor biosynthesis; pyridoxine 5'-phosphate biosynthesis; pyridoxine 5'-phosphate from D-erythrose 4-phosphate: step 5/5. Catalyzes the complicated ring closure reaction between the two acyclic compounds 1-deoxy-D-xylulose-5-phosphate (DXP) and 3-amino-2-oxopropyl phosphate (1-amino-acetone-3-phosphate or AAP) to form pyridoxine 5'-phosphate (PNP) and inorganic phosphate. The chain is Pyridoxine 5'-phosphate synthase from Nitrosococcus oceani (strain ATCC 19707 / BCRC 17464 / JCM 30415 / NCIMB 11848 / C-107).